The primary structure comprises 216 residues: Uracil phosphoribosyltransferase (216 aa).

5-phospho-alpha-D-ribose 1-diphosphate is bound by residues arginine 85, arginine 110, and 135–143 (DPMVATGYS). Uracil-binding positions include isoleucine 200 and 205 to 207 (GDA). Position 206 (aspartate 206) interacts with 5-phospho-alpha-D-ribose 1-diphosphate.

It belongs to the UPRTase family. Requires Mg(2+) as cofactor.

It catalyses the reaction UMP + diphosphate = 5-phospho-alpha-D-ribose 1-diphosphate + uracil. Its pathway is pyrimidine metabolism; UMP biosynthesis via salvage pathway; UMP from uracil: step 1/1. With respect to regulation, allosterically activated by GTP. Functionally, catalyzes the conversion of uracil and 5-phospho-alpha-D-ribose 1-diphosphate (PRPP) to UMP and diphosphate. The sequence is that of Uracil phosphoribosyltransferase from Burkholderia thailandensis (strain ATCC 700388 / DSM 13276 / CCUG 48851 / CIP 106301 / E264).